Reading from the N-terminus, the 251-residue chain is DNA repair protein RecO (251 aa).

This sequence belongs to the RecO family.

In terms of biological role, involved in DNA repair and RecF pathway recombination. In Lactococcus lactis subsp. cremoris (strain SK11), this protein is DNA repair protein RecO.